Here is a 1379-residue protein sequence, read N- to C-terminus: Protein three rows (1379 aa).

The interval V1031 to Q1037 is separase cleavage-site. Disordered regions lie at residues P1206 to A1231, P1248 to K1309, and I1328 to H1379. A compositionally biased stretch (polar residues) spans A1213–K1228. Residues P1248–S1267 are compositionally biased toward low complexity.

As to quaternary structure, interacts with pim and Sse. Cleavage of thr contributes to inactivation of Sse. In terms of processing, proteolytically cleaved after the metaphase-to-anaphase transition, C-terminal cleavage product is degraded. Cleavage can only proceed within complexes that contain active Sse. In terms of tissue distribution, during embryogenesis, expressed in Malpighian tubule buds, and epithelia of foregut and hindgut.

Its subcellular location is the cytoplasm. Required specifically for chromosome disjunction during all mitoses; maternally provided protein is sufficient until mitosis 14 then zygotic protein is required. Involved in formation and/or maintenance of epithelial structures: bud extension during Malpighian tubule development, and foregut and hindgut morphogenesis. The protein is Protein three rows (thr) of Drosophila melanogaster (Fruit fly).